Reading from the N-terminus, the 1058-residue chain is MDSIQQRRGGIVSLSPAQTPRSSDKSARESRSSESNSTNRNDKEKGVNVQVILRCRPLSEDEARIHTPVVISCNENRREVAATQSIAGKHIDRHFAFDKVFGPASQQKDLYDQAICPIVFEVLEGYNCTIFAYGQTGTGKTYTMEGGARKKNGEFPSDAGVIPRAVKQIFDILEAQGAEYSMKVTFLELYNEEISDLLAPEETIKFVDEKSKKSIALMEDGKGSVFVRGLEEEIVSTANEIYKILEKGSAKRRTAETLLNKQSSRSHSIFSITIHIKENTPEGEEMIKCGKLNLVDLAGSENISRSGAREGRAREAGEINKSLLTLGRVINALVEHSGHIPYRDSKLTRLLRESLGGKTKTCVIATISPSIHCLEETLSTLDYAHRAKNIKNKPEINQKMMKSAVMKDLYSEIDRLKQEVYAAREKNGIYIPKDRYIQEEAEKKAMAEKIERLELQSESKDKRVVDLQELYNSQQILTAELSEKLEKTEKKLEETEHSLFDLEEKYRQANATIKEKEFVISNLLKSEKSLVERAFQLRTELESASSDVSNLFSKIERKDKIEDGNRFLIQKFQSQLTQQLELLHKTVASSVTQQEVQLKHMEEDMESFVSTKSEATEELRDRLSKLKRVYGSGIEALDNIAVKLDGNSQSTFSSLNSEVSKHSHELENVFKGFASEADMLLQDLQSSLNKQEEKLITFAQQQRKAHSRAVDTARSVSKVTVEFFKTLDTHATKLTGIVEEAQTVNHKKLSEFENKFEECAANEERQLLEKVAELLANSNARKKNLVQMAVHDLRESASTRTTTLQHEMSTMQDSTSSIKAEWSIHMEKTESSHHEDTSAVESGKKAMQEVLLNCLEKTEMSAHQWRKAQESLVSLERNNVASVDSIVRGGMDANENLRSQFSTAVSSSLDVFDAANSSLLTSIDHSLQLDNDACTKVNSMIIPCCEDLIELKSDHNHKIIEITENAGKCLLDEYVVDEPSCSTPKKRPIDIPSIESIEELRTPASEELLRAFRDEKLSKQANGDAKQQQQQQQQHLIRASSLYEAAVSDSRYPLSAVN.

Residues 1–43 (MDSIQQRRGGIVSLSPAQTPRSSDKSARESRSSESNSTNRNDK) are disordered. Residues 22-32 (SSDKSARESRS) are compositionally biased toward basic and acidic residues. Residues 48-390 (NVQVILRCRP…LDYAHRAKNI (343 aa)) enclose the Kinesin motor domain. 134 to 141 (GQTGTGKT) contacts ATP. A coiled-coil region spans residues 438–517 (QEEAEKKAMA…QANATIKEKE (80 aa)).

The protein belongs to the TRAFAC class myosin-kinesin ATPase superfamily. Kinesin family. KIN-5/BimC subfamily.

It localises to the cytoplasm. The protein resides in the cytoskeleton. It is found in the spindle. Its function is as follows. Responsible for microtubule translocation. May be important for the organization of phragmoplast-specific arrays of microtubules. Plays an essential role in stabilizing the mitotic spindle. Required during mitotic cytokinesis. The protein is Kinesin-like protein KIN-5D of Arabidopsis thaliana (Mouse-ear cress).